Reading from the N-terminus, the 153-residue chain is Ribosomal RNA large subunit methyltransferase H (153 aa).

Residues L70, G102, and 121-126 (LSRMTF) each bind S-adenosyl-L-methionine.

The protein belongs to the RNA methyltransferase RlmH family. As to quaternary structure, homodimer.

It is found in the cytoplasm. It catalyses the reaction pseudouridine(1915) in 23S rRNA + S-adenosyl-L-methionine = N(3)-methylpseudouridine(1915) in 23S rRNA + S-adenosyl-L-homocysteine + H(+). Functionally, specifically methylates the pseudouridine at position 1915 (m3Psi1915) in 23S rRNA. The chain is Ribosomal RNA large subunit methyltransferase H from Geotalea daltonii (strain DSM 22248 / JCM 15807 / FRC-32) (Geobacter daltonii).